The chain runs to 104 residues: Large ribosomal subunit protein bL21 (104 aa).

This sequence belongs to the bacterial ribosomal protein bL21 family. In terms of assembly, part of the 50S ribosomal subunit. Contacts protein L20.

Functionally, this protein binds to 23S rRNA in the presence of protein L20. This chain is Large ribosomal subunit protein bL21, found in Desulfosudis oleivorans (strain DSM 6200 / JCM 39069 / Hxd3) (Desulfococcus oleovorans).